The following is a 415-amino-acid chain: Serine hydroxymethyltransferase (415 aa).

(6S)-5,6,7,8-tetrahydrofolate-binding positions include Leu-120 and 124 to 126 (GHL). Lys-229 bears the N6-(pyridoxal phosphate)lysine mark.

The protein belongs to the SHMT family. Homodimer. Requires pyridoxal 5'-phosphate as cofactor.

The protein resides in the cytoplasm. It catalyses the reaction (6R)-5,10-methylene-5,6,7,8-tetrahydrofolate + glycine + H2O = (6S)-5,6,7,8-tetrahydrofolate + L-serine. The protein operates within one-carbon metabolism; tetrahydrofolate interconversion. It participates in amino-acid biosynthesis; glycine biosynthesis; glycine from L-serine: step 1/1. Catalyzes the reversible interconversion of serine and glycine with tetrahydrofolate (THF) serving as the one-carbon carrier. This reaction serves as the major source of one-carbon groups required for the biosynthesis of purines, thymidylate, methionine, and other important biomolecules. Also exhibits THF-independent aldolase activity toward beta-hydroxyamino acids, producing glycine and aldehydes, via a retro-aldol mechanism. The protein is Serine hydroxymethyltransferase of Caldicellulosiruptor bescii (strain ATCC BAA-1888 / DSM 6725 / KCTC 15123 / Z-1320) (Anaerocellum thermophilum).